The chain runs to 763 residues: Phosphoglycerol transferase I (763 aa).

The next 4 helical transmembrane spans lie at 1 to 21 (MSEL…AWKA), 26 to 46 (WWFA…ITLF), 77 to 97 (ILPG…LGWI), and 108 to 128 (FGYS…SPAF).

Belongs to the OpgB family.

It localises to the cell inner membrane. It carries out the reaction a phosphatidylglycerol + a membrane-derived-oligosaccharide D-glucose = a 1,2-diacyl-sn-glycerol + a membrane-derived-oligosaccharide 6-(glycerophospho)-D-glucose.. Its pathway is glycan metabolism; osmoregulated periplasmic glucan (OPG) biosynthesis. Functionally, transfers a phosphoglycerol residue from phosphatidylglycerol to the membrane-bound nascent glucan backbones. This chain is Phosphoglycerol transferase I, found in Escherichia coli (strain ATCC 8739 / DSM 1576 / NBRC 3972 / NCIMB 8545 / WDCM 00012 / Crooks).